A 258-amino-acid chain; its full sequence is Acetylglutamate kinase (258 aa).

Substrate is bound by residues 44-45 (GG), arginine 66, and asparagine 158. ATP is bound by residues 181-186 (DVSGIL) and 209-211 (IIT).

Belongs to the acetylglutamate kinase family. ArgB subfamily. In terms of assembly, homodimer.

It localises to the cytoplasm. The catalysed reaction is N-acetyl-L-glutamate + ATP = N-acetyl-L-glutamyl 5-phosphate + ADP. Its pathway is amino-acid biosynthesis; L-arginine biosynthesis; N(2)-acetyl-L-ornithine from L-glutamate: step 2/4. Catalyzes the ATP-dependent phosphorylation of N-acetyl-L-glutamate. This is Acetylglutamate kinase from Shigella dysenteriae serotype 1 (strain Sd197).